Here is a 166-residue protein sequence, read N- to C-terminus: Transcriptional repressor NrdR (166 aa).

A zinc finger lies at 3 to 34 (CPFCRNPDSRVVDSRMADDGSSIRRRRQCPEC). An ATP-cone domain is found at 46–136 (LSVIKRSGVG…VYQAFESLED (91 aa)).

The protein belongs to the NrdR family. Zn(2+) serves as cofactor.

Its function is as follows. Negatively regulates transcription of bacterial ribonucleotide reductase nrd genes and operons by binding to NrdR-boxes. This chain is Transcriptional repressor NrdR, found in Paenarthrobacter aurescens (strain TC1).